Here is a 341-residue protein sequence, read N- to C-terminus: Phenylalanine--tRNA ligase alpha subunit (341 aa).

Position 256 (Glu-256) interacts with Mg(2+).

This sequence belongs to the class-II aminoacyl-tRNA synthetase family. Phe-tRNA synthetase alpha subunit type 1 subfamily. In terms of assembly, tetramer of two alpha and two beta subunits. Requires Mg(2+) as cofactor.

It is found in the cytoplasm. The catalysed reaction is tRNA(Phe) + L-phenylalanine + ATP = L-phenylalanyl-tRNA(Phe) + AMP + diphosphate + H(+). This Chlamydia felis (strain Fe/C-56) (Chlamydophila felis) protein is Phenylalanine--tRNA ligase alpha subunit.